Consider the following 342-residue polypeptide: D-erythrose-4-phosphate dehydrogenase (342 aa).

Residue 11 to 12 participates in NAD(+) binding; that stretch reads RV. Substrate contacts are provided by residues 153–155, Arg-199, 212–213, and Arg-235; these read SCT and TK. Residue Cys-154 is the Nucleophile of the active site. Residue Asn-317 coordinates NAD(+).

The protein belongs to the glyceraldehyde-3-phosphate dehydrogenase family. Epd subfamily. In terms of assembly, homotetramer.

The protein resides in the cytoplasm. The enzyme catalyses D-erythrose 4-phosphate + NAD(+) + H2O = 4-phospho-D-erythronate + NADH + 2 H(+). The protein operates within cofactor biosynthesis; pyridoxine 5'-phosphate biosynthesis; pyridoxine 5'-phosphate from D-erythrose 4-phosphate: step 1/5. Functionally, catalyzes the NAD-dependent conversion of D-erythrose 4-phosphate to 4-phosphoerythronate. This is D-erythrose-4-phosphate dehydrogenase from Pseudoalteromonas atlantica (strain T6c / ATCC BAA-1087).